The sequence spans 199 residues: MATIVAWESRNLQLQGGGGGHGGGGGGGGGERREYMFEKVVTPSDVGKLNRLVVPKHYAEKYFPLGPAARTSPAGTVLCFEDARGGDSTWRFRYSYWSSSQSYVITKGWSRYVRDKRLAAGDTVSFCRAGARLFIDCRKRAASVSSSSLVPPALIKVQLPPSRPVVDEEEAACGRRCLRLFGVDLQLRADASPALDLQL.

The segment at 13–32 is disordered; the sequence is QLQGGGGGHGGGGGGGGGER. Residues 15–29 are compositionally biased toward gly residues; the sequence is QGGGGGHGGGGGGGG. The segment at residues 37 to 141 is a DNA-binding region (TF-B3); that stretch reads FEKVVTPSDV…RLFIDCRKRA (105 aa).

The protein localises to the nucleus. The chain is B3 domain-containing protein Os06g0107800 from Oryza sativa subsp. japonica (Rice).